The chain runs to 92 residues: N(2)-fixation sustaining protein CowN (92 aa).

It belongs to the CowN family.

Is required to sustain N(2)-dependent growth in the presence of low levels of carbon monoxide (CO). Probably acts by protecting the N(2) fixation ability of the nitrogenase complex, which is inactivated in the presence of CO. In Rhodopseudomonas palustris (strain BisB18), this protein is N(2)-fixation sustaining protein CowN.